We begin with the raw amino-acid sequence, 929 residues long: Transcription initiation factor TFIID subunit 3 (929 aa).

Disordered regions lie at residues 131–152 and 176–197; these read IVSS…TSAE and LGKR…RPRL. Phosphoserine is present on residues S183, S199, S229, and S243. 2 disordered regions span residues 221–358 and 405–578; these read TQKI…ETIQ and DPFE…PWKE. Over residues 265 to 288 the composition is skewed to low complexity; sequence TKSFTPKTKTKTSSPGQKTKSPKT. K266 carries the post-translational modification N6-acetyllysine. S291, S297, and S301 each carry phosphoserine. 2 stretches are compositionally biased toward polar residues: residues 340–358 and 434–466; these read PNRT…ETIQ and PKAS…SWTM. Phosphothreonine is present on T501. The segment covering 504 to 514 has biased composition (basic and acidic residues); it reads PLHKVYEEKTK. Basic residues predominate over residues 523-537; the sequence is KKLKKELKTKMKKKE. Positions 538 to 578 are enriched in basic and acidic residues; sequence KQRDREREKDKNKDKSKEKDKVKEKEKDKETGRETKYPWKE. K581 is covalently cross-linked (Glycyl lysine isopeptide (Lys-Gly) (interchain with G-Cter in SUMO2)). Composition is skewed to basic and acidic residues over residues 603 to 612 and 621 to 648; these read KLKDGLVRKE and KDRE…DKMK. The disordered stretch occupies residues 603 to 658; it reads KLKDGLVRKEKEKHKDKKKDREKGKKDKDKREKEKVKDKGREDKMKAPAPPLVLPP. Phosphoserine is present on S667. A compositionally biased stretch (basic and acidic residues) spans 692–701; the sequence is EKEKVKEKEK. Positions 692–748 are disordered; it reads EKEKVKEKEKKKDKKEKKKKKEKEKEKKEKEREKEKREREKREKEKEKHKHEKIKVE. The span at 702–713 shows a compositional bias: basic residues; the sequence is KKDKKEKKKKKE. The segment covering 714 to 737 has biased composition (basic and acidic residues); sequence KEKEKKEKEREKEKREREKREKEK. K746 participates in a covalent cross-link: Glycyl lysine isopeptide (Lys-Gly) (interchain with G-Cter in SUMO2). At S755 the chain carries Phosphoserine. N6-acetyllysine is present on K776. Residues 778–787 show a composition bias toward low complexity; it reads VPAPEAKPAP. Positions 778 to 807 are disordered; the sequence is VPAPEAKPAPSQNRPKTPPPAPAPAPGPML. A compositionally biased stretch (pro residues) spans 793 to 804; sequence KTPPPAPAPAPG. Residues 865 to 915 form a PHD-type zinc finger; that stretch reads IWICPGCNKPDDGSPMIGCDDCDDWYHWPCVGIMTAPPEEMQWFCPKCANK. Zn(2+)-binding residues include C868, C871, C883, C886, H891, C894, C909, and C912.

The protein belongs to the TAF3 family. As to quaternary structure, component of the TFIID basal transcription factor complex, composed of TATA-box-binding protein TBP, and a number of TBP-associated factors (TAFs), including TAF1, TAF2, TAF3, TAF4, TAF5, TAF6, TAF7, TAF8, TAF9, TAF10, TAF11, TAF12 and TAF13. Interacts with TAF10 via the histone fold. Interacts with TAF13, TBP, SAP130 and GCN5L2. Interacts with TBPL2.

The protein localises to the nucleus. In terms of biological role, the TFIID basal transcription factor complex plays a major role in the initiation of RNA polymerase II (Pol II)-dependent transcription. TFIID recognizes and binds promoters with or without a TATA box via its subunit TBP, a TATA-box-binding protein, and promotes assembly of the pre-initiation complex (PIC). The TFIID complex consists of TBP and TBP-associated factors (TAFs), including TAF1, TAF2, TAF3, TAF4, TAF5, TAF6, TAF7, TAF8, TAF9, TAF10, TAF11, TAF12 and TAF13. The TFIID complex structure can be divided into 3 modules TFIID-A, TFIID-B, and TFIID-C. TAF3 forms the TFIID-A module together with TAF5 and TBP. Required in complex with TBPL2 for the differentiation of myoblasts into myocytes. The TAF3-TBPL2 complex replaces TFIID at specific promoters at an early stage in the differentiation process. This is Transcription initiation factor TFIID subunit 3 (TAF3) from Homo sapiens (Human).